The following is a 231-amino-acid chain: Adenylate kinase (231 aa).

12–17 (GAGKGT) lines the ATP pocket. The segment at 32–61 (STGDMLRAAVKAKTPLGLEVKKIMESGGLV) is NMP. AMP is bound by residues threonine 33, arginine 38, 59-61 (GLV), 87-90 (GFPR), and glutamine 94. The interval 124–161 (GRLIHPASGRTYHRRYNPPKVADKDDVTGEPLIQRADD) is LID. ATP is bound by residues arginine 125 and 134–135 (TY). Positions 158 and 169 each coordinate AMP. Glycine 205 is a binding site for ATP.

Belongs to the adenylate kinase family. In terms of assembly, monomer.

It localises to the cytoplasm. It catalyses the reaction AMP + ATP = 2 ADP. It participates in purine metabolism; AMP biosynthesis via salvage pathway; AMP from ADP: step 1/1. Its function is as follows. Catalyzes the reversible transfer of the terminal phosphate group between ATP and AMP. Plays an important role in cellular energy homeostasis and in adenine nucleotide metabolism. This chain is Adenylate kinase, found in Coxiella burnetii (strain CbuK_Q154) (Coxiella burnetii (strain Q154)).